Reading from the N-terminus, the 265-residue chain is Protein Msed_2121 (265 aa).

Belongs to the CinA family.

The sequence is that of Protein Msed_2121 from Metallosphaera sedula (strain ATCC 51363 / DSM 5348 / JCM 9185 / NBRC 15509 / TH2).